A 260-amino-acid polypeptide reads, in one-letter code: Alpha carbonic anhydrase 6 (260 aa).

An N-terminal signal peptide occupies residues 1-28 (MDANTKTILFFVVFFIDLFSPNILFVYA). One can recognise an Alpha-carbonic anhydrase domain in the interval 35 to 260 (PLFTYKQKTE…FVFVFWCMLM (226 aa)). Cysteines 60 and 215 form a disulfide. Residue histidine 100 is the Proton acceptor of the active site. Zn(2+) contacts are provided by histidine 126 and histidine 128. Asparagine 136 carries an N-linked (GlcNAc...) asparagine glycan. Histidine 145 lines the Zn(2+) pocket. 211–212 (TI) lines the substrate pocket.

The protein belongs to the alpha-class carbonic anhydrase family. It depends on Zn(2+) as a cofactor. Post-translationally, N-glycosylated.

It localises to the plastid. The protein localises to the chloroplast stroma. The enzyme catalyses hydrogencarbonate + H(+) = CO2 + H2O. In terms of biological role, reversible hydration of carbon dioxide. In Arabidopsis thaliana (Mouse-ear cress), this protein is Alpha carbonic anhydrase 6 (ACA6).